Here is a 224-residue protein sequence, read N- to C-terminus: Small ribosomal subunit protein uS3 (224 aa).

Residues 39–107 (IREFLKKKPS…DVWVEIAEVK (69 aa)) form the KH type-2 domain.

This sequence belongs to the universal ribosomal protein uS3 family. In terms of assembly, part of the 30S ribosomal subunit. Forms a tight complex with proteins S10 and S14.

Its function is as follows. Binds the lower part of the 30S subunit head. Binds mRNA in the 70S ribosome, positioning it for translation. The protein is Small ribosomal subunit protein uS3 of Chlamydia muridarum (strain MoPn / Nigg).